Consider the following 491-residue polypeptide: MDSSDNKAATDEEIRRALKAADLMKILDGKMALGNKSGTKNLGEHKFWKTQPVPQITGSGASAPMEEGPIDDPKTPADVKQEPGVLPAGFEWSTIDINDEEQSKEVYVLLCENYVEDDDAMFRFNYSREFLLWALTAPGYLPDWHIGVRVQKTKKLVAFISGIKIDIRVRAKTFPAAEINFLCVHKKLRSKRLAPVLIKEVTRRVNLTNIWQAIYTAGVILPTPIGTCRYFHRNLNPPKLVDIGFSPLPRGSTIARLVQQYSVPSHPRIPGFREMKKEDVPQVGALLRRYLDRFDVAQAFKDDDEVEHWFLSGQGKEVGGRRVEQVVWAYVVEDPTTHRITDLISFYALPSTIMKHPKHNLLNAAYMFYYATDVIFPPPSSSAHSDADVNAGESSVAAVGTGGEDAKTKKKLETRLNALTADLLIIAKQAGFDVFNALTLLDNNMFLQEQKFGPGDGYLNYYLYNWNCAPIDGGQHSTTAKQGSKIGVVML.

45-48 (HKFW) provides a ligand contact to tetradecanoyl-CoA. The segment at 53 to 79 (VPQITGSGASAPMEEGPIDDPKTPADV) is disordered. Residues 182–184 (LCV) and 190–194 (SKRLA) contribute to the tetradecanoyl-CoA site. The Proton acceptor; via carboxylate role is filled by leucine 491.

Belongs to the NMT family. Monomer.

It is found in the cytoplasm. The catalysed reaction is N-terminal glycyl-[protein] + tetradecanoyl-CoA = N-tetradecanoylglycyl-[protein] + CoA + H(+). Adds a myristoyl group to the N-terminal glycine residue of certain cellular proteins. The polypeptide is Glycylpeptide N-tetradecanoyltransferase (Cryptococcus neoformans (Filobasidiella neoformans)).